The primary structure comprises 464 residues: Flavin-containing monooxygenase FMO GS-OX-like 7 (464 aa).

18–23 (GAGAAG) provides a ligand contact to FAD. 214 to 219 (GSSVSG) lines the NADP(+) pocket.

The protein belongs to the FMO family. FAD serves as cofactor.

In terms of biological role, catalyzes the conversion of methylthioalkyl glucosinolates of any chain length into methylsulfinylalkyl glucosinolates. In Arabidopsis thaliana (Mouse-ear cress), this protein is Flavin-containing monooxygenase FMO GS-OX-like 7.